The following is a 201-amino-acid chain: Probable molybdenum cofactor guanylyltransferase (201 aa).

GTP is bound by residues 20 to 22, Lys32, Asp77, and Asp106; that span reads LAG. Asp106 is a Mg(2+) binding site.

It belongs to the MobA family. The cofactor is Mg(2+).

It is found in the cytoplasm. It carries out the reaction Mo-molybdopterin + GTP + H(+) = Mo-molybdopterin guanine dinucleotide + diphosphate. Its function is as follows. Transfers a GMP moiety from GTP to Mo-molybdopterin (Mo-MPT) cofactor (Moco or molybdenum cofactor) to form Mo-molybdopterin guanine dinucleotide (Mo-MGD) cofactor. The sequence is that of Probable molybdenum cofactor guanylyltransferase from Aquifex aeolicus (strain VF5).